The following is a 399-amino-acid chain: Succinyl-diaminopimelate desuccinylase (399 aa).

H80 provides a ligand contact to Zn(2+). D82 is an active-site residue. D113 contacts Zn(2+). E147 acts as the Proton acceptor in catalysis. 3 residues coordinate Zn(2+): E148, E176, and H366.

Belongs to the peptidase M20A family. DapE subfamily. As to quaternary structure, homodimer. It depends on Zn(2+) as a cofactor. The cofactor is Co(2+).

The enzyme catalyses N-succinyl-(2S,6S)-2,6-diaminopimelate + H2O = (2S,6S)-2,6-diaminopimelate + succinate. Its pathway is amino-acid biosynthesis; L-lysine biosynthesis via DAP pathway; LL-2,6-diaminopimelate from (S)-tetrahydrodipicolinate (succinylase route): step 3/3. Catalyzes the hydrolysis of N-succinyl-L,L-diaminopimelic acid (SDAP), forming succinate and LL-2,6-diaminopimelate (DAP), an intermediate involved in the bacterial biosynthesis of lysine and meso-diaminopimelic acid, an essential component of bacterial cell walls. The polypeptide is Succinyl-diaminopimelate desuccinylase (Colwellia psychrerythraea (strain 34H / ATCC BAA-681) (Vibrio psychroerythus)).